The following is a 608-amino-acid chain: Microtubule-associated protein 70-3 (608 aa).

Residues 1-23 form a disordered region; the sequence is MADGVEEGNAVAPRGPARRRGTV. Residues 40–346 adopt a coiled-coil conformation; sequence DPVRVELTRL…ARSEAQLKEK (307 aa). Positions 224–458 are required for targeting to microtubules; that stretch reads ILDKLQRQKV…HLLNRSTDAV (235 aa). 2 disordered regions span residues 354 to 493 and 570 to 608; these read LEDG…TANN and DKEQEVKARRLGSSKGTGSSQVLSGSRSSSRSGLTRNYQ. Over residues 363 to 379 the composition is skewed to polar residues; the sequence is SGSSRLPTEGKSFSNGP. Residues 402 to 421 are compositionally biased toward low complexity; the sequence is RRSPSFHSRSSLSSSSSLVL. Polar residues predominate over residues 476-493; the sequence is IENTNSNTDESNKETANN. Positions 542-576 form a coiled coil; sequence LTKAMEVEAKKMRREVAAMEKEVAAMRVDKEQEVK. Residues 586–608 are compositionally biased toward low complexity; the sequence is TGSSQVLSGSRSSSRSGLTRNYQ.

The protein belongs to the MAP70 family.

The protein resides in the cytoplasm. Its subcellular location is the cytoskeleton. Plant-specific protein that interact with microtubules. The protein is Microtubule-associated protein 70-3 (MAP70.3) of Oryza sativa subsp. japonica (Rice).